The following is a 204-amino-acid chain: Lymphotoxin-alpha (204 aa).

An N-terminal signal peptide occupies residues 1–33 (MTPPGRLYLLRVCSTPPLLLLGLLLALPLEAQG). Positions 62–204 (PAAHLVGDPS…SSVFFGAFAL (143 aa)) constitute a THD domain. Asparagine 95 carries N-linked (GlcNAc...) asparagine glycosylation. Residues cysteine 119 and cysteine 155 are joined by a disulfide bond.

Belongs to the tumor necrosis factor family. In terms of assembly, homotrimer, and heterotrimer of either two LTB and one LTA subunits or (less prevalent) two LTA and one LTB subunits. Interacts with TNFRSF14.

Its subcellular location is the secreted. It localises to the membrane. Cytokine that in its homotrimeric form binds to TNFRSF1A/TNFR1, TNFRSF1B/TNFBR and TNFRSF14/HVEM. In its heterotrimeric form with LTB binds to TNFRSF3/LTBR. Lymphotoxin is produced by lymphocytes and is cytotoxic for a wide range of tumor cells in vitro and in vivo. This Bos taurus (Bovine) protein is Lymphotoxin-alpha (LTA).